The primary structure comprises 107 residues: Small ribosomal subunit protein uS15 (107 aa).

K27 carries the N6-acetyllysine; alternate modification. K27 is modified (N6-succinyllysine; alternate). K27 participates in a covalent cross-link: Glycyl lysine isopeptide (Lys-Gly) (interchain with G-Cter in ubiquitin). S30 is modified (phosphoserine). An N6-succinyllysine modification is found at K34. Residue Y38 is modified to Phosphotyrosine. A Glycyl lysine isopeptide (Lys-Gly) (interchain with G-Cter in SUMO2) cross-link involves residue K43.

It belongs to the universal ribosomal protein uS15 family. Component of the small ribosomal subunit. Part of the small subunit (SSU) processome, composed of more than 70 proteins and the RNA chaperone small nucleolar RNA (snoRNA) U3. Ubiquitinated at Lys-27 by RNF14 and RNF25 in response to ribosome collisions (ribosome stalling).

It is found in the cytoplasm. Its subcellular location is the nucleus. The protein localises to the nucleolus. Component of the small ribosomal subunit. The ribosome is a large ribonucleoprotein complex responsible for the synthesis of proteins in the cell. Part of the small subunit (SSU) processome, first precursor of the small eukaryotic ribosomal subunit. During the assembly of the SSU processome in the nucleolus, many ribosome biogenesis factors, an RNA chaperone and ribosomal proteins associate with the nascent pre-rRNA and work in concert to generate RNA folding, modifications, rearrangements and cleavage as well as targeted degradation of pre-ribosomal RNA by the RNA exosome. The protein is Small ribosomal subunit protein uS15 (RPS13) of Sus scrofa (Pig).